The primary structure comprises 165 residues: Endoribonuclease YbeY (165 aa).

The Zn(2+) site is built by H130, H134, and H140.

The protein belongs to the endoribonuclease YbeY family. Requires Zn(2+) as cofactor.

It localises to the cytoplasm. In terms of biological role, single strand-specific metallo-endoribonuclease involved in late-stage 70S ribosome quality control and in maturation of the 3' terminus of the 16S rRNA. The chain is Endoribonuclease YbeY from Streptococcus suis (strain 98HAH33).